The sequence spans 333 residues: Adenosine deaminase (333 aa).

Zn(2+) is bound by residues His-12 and His-14. Substrate is bound by residues His-14, Asp-16, and Gly-170. Residue His-197 coordinates Zn(2+). Glu-200 serves as the catalytic Proton donor. Position 278 (Asp-278) interacts with Zn(2+). Asp-279 is a binding site for substrate.

Belongs to the metallo-dependent hydrolases superfamily. Adenosine and AMP deaminases family. Adenosine deaminase subfamily. Zn(2+) serves as cofactor.

It catalyses the reaction adenosine + H2O + H(+) = inosine + NH4(+). The catalysed reaction is 2'-deoxyadenosine + H2O + H(+) = 2'-deoxyinosine + NH4(+). Its function is as follows. Catalyzes the hydrolytic deamination of adenosine and 2-deoxyadenosine. The sequence is that of Adenosine deaminase from Escherichia coli O7:K1 (strain IAI39 / ExPEC).